The sequence spans 360 residues: Protein Wnt-2 (360 aa).

An N-terminal signal peptide occupies residues 1–26; it reads MNSSSLFGIWLSVPLILSWVTPQVSS. 11 disulfide bridges follow: Cys76/Cys87, Cys127/Cys135, Cys137/Cys157, Cys206/Cys220, Cys208/Cys215, Cys278/Cys309, Cys294/Cys304, Cys308/Cys348, Cys324/Cys339, Cys326/Cys336, and Cys331/Cys332. A lipid anchor (O-palmitoleoyl serine; by PORCN) is attached at Ser212. Asn295 carries N-linked (GlcNAc...) asparagine glycosylation.

The protein belongs to the Wnt family. Palmitoleoylation is required for efficient binding to frizzled receptors. Depalmitoleoylation leads to Wnt signaling pathway inhibition.

The protein localises to the secreted. It is found in the extracellular space. The protein resides in the extracellular matrix. Its function is as follows. Ligand for members of the frizzled family of seven transmembrane receptors. Functions in the canonical Wnt signaling pathway that results in activation of transcription factors of the TCF/LEF family. Functions as a upstream regulator of FGF10 expression. Plays an important role in embryonic lung development. May contribute to embryonic brain development by regulating the proliferation of dopaminergic precursors and neurons. The chain is Protein Wnt-2 (WNT2) from Monodelphis domestica (Gray short-tailed opossum).